The sequence spans 1305 residues: DNA-directed DNA polymerase (1305 aa).

The protein belongs to the DNA polymerase type-C family.

It carries out the reaction DNA(n) + a 2'-deoxyribonucleoside 5'-triphosphate = DNA(n+1) + diphosphate. Replicates viral genomic DNA. The sequence is that of DNA-directed DNA polymerase from Bacillus pumilus (Bacillus mesentericus).